The following is a 311-amino-acid chain: Aspartate carbamoyltransferase catalytic subunit (311 aa).

Carbamoyl phosphate contacts are provided by R52 and T53. K80 provides a ligand contact to L-aspartate. Carbamoyl phosphate-binding residues include R102, H131, and Q134. L-aspartate is bound by residues R164 and R216. Residues A259 and P260 each contribute to the carbamoyl phosphate site.

This sequence belongs to the aspartate/ornithine carbamoyltransferase superfamily. ATCase family. In terms of assembly, heterododecamer (2C3:3R2) of six catalytic PyrB chains organized as two trimers (C3), and six regulatory PyrI chains organized as three dimers (R2).

The enzyme catalyses carbamoyl phosphate + L-aspartate = N-carbamoyl-L-aspartate + phosphate + H(+). The protein operates within pyrimidine metabolism; UMP biosynthesis via de novo pathway; (S)-dihydroorotate from bicarbonate: step 2/3. Its function is as follows. Catalyzes the condensation of carbamoyl phosphate and aspartate to form carbamoyl aspartate and inorganic phosphate, the committed step in the de novo pyrimidine nucleotide biosynthesis pathway. In Lactiplantibacillus plantarum (strain ATCC BAA-793 / NCIMB 8826 / WCFS1) (Lactobacillus plantarum), this protein is Aspartate carbamoyltransferase catalytic subunit.